A 148-amino-acid chain; its full sequence is Ubiquitin-conjugating enzyme E2 10 (148 aa).

The UBC core domain maps to 1 to 147 (MASKRILKEL…ARSWTQKYAM (147 aa)). Residue Cys85 is the Glycyl thioester intermediate of the active site.

It belongs to the ubiquitin-conjugating enzyme family. Interacts with CHIP and the E3 ubiquitin ligase BB. Associates with the E3 ubiquitin ligase JMJ24. As to expression, ubiquitously expressed with the highest levels in rosette leaves, roots and petals.

The enzyme catalyses S-ubiquitinyl-[E1 ubiquitin-activating enzyme]-L-cysteine + [E2 ubiquitin-conjugating enzyme]-L-cysteine = [E1 ubiquitin-activating enzyme]-L-cysteine + S-ubiquitinyl-[E2 ubiquitin-conjugating enzyme]-L-cysteine.. It participates in protein modification; protein ubiquitination. Accepts the ubiquitin from the E1 complex and catalyzes its covalent attachment to other proteins. Mediates the selective degradation of short-lived and abnormal proteins. This is Ubiquitin-conjugating enzyme E2 10 from Arabidopsis thaliana (Mouse-ear cress).